Here is a 400-residue protein sequence, read N- to C-terminus: Probable phospho-2-dehydro-3-deoxyheptonate aldolase (400 aa).

It belongs to the class-II DAHP synthase family.

It carries out the reaction D-erythrose 4-phosphate + phosphoenolpyruvate + H2O = 7-phospho-2-dehydro-3-deoxy-D-arabino-heptonate + phosphate. The protein operates within antibiotic biosynthesis; phenazine biosynthesis. The chain is Probable phospho-2-dehydro-3-deoxyheptonate aldolase (phzC) from Pseudomonas fluorescens.